The sequence spans 1135 residues: Envelopment polyprotein (1135 aa).

The N-terminal stretch at 1–18 (MGIWKWLVMASLVWPVLT) is a signal peptide. Over 19 to 485 (LRNVYDMKIE…VPGFHGWATA (467 aa)) the chain is Lumenal. Disulfide bonds link Cys-29–Cys-151, Cys-63–Cys-157, Cys-109–Cys-128, Cys-133–Cys-138, Cys-175–Cys-185, Cys-210–Cys-247, Cys-234–Cys-351, Cys-376–Cys-435, Cys-380–Cys-389, Cys-405–Cys-424, and Cys-452–Cys-475. N-linked (GlcNAc...) asparagine; by host glycosylation occurs at Asn-134. 2 N-linked (GlcNAc...) asparagine; by host glycosylation sites follow: Asn-235 and Asn-347. The N-linked (GlcNAc...) asparagine; by host glycan is linked to Asn-399. Residues 486–506 (ALLVTFCFGWVLIPAITFIIL) form a helical membrane-spanning segment. Over 507–627 (TVLKFIANIF…LNLFRYKSRC (121 aa)) the chain is Cytoplasmic. Residues 516-533 (FHTSNQENRLKSVLRKIK) form a binding to the ribonucleoprotein region. 2 consecutive CCHC-type zinc fingers follow at residues 545 to 565 (CDVC…GVSC) and 570 to 591 (CPYC…YKVC). Binding to the ribonucleoprotein regions lie at residues 588–605 (YKVC…KKTV), 592–603 (QVTHRFRDDLKK), and 611–625 (TPGC…RYKS). One can recognise an ITAM domain in the interval 611 to 634 (TPGCYRTLNLFRYKSRCYIFTMWI). A YxxL motif is present at residues 615–618 (YRTL). Residues 628–648 (YIFTMWIFLLVLESILWAASA) form a helical membrane-spanning segment. The Lumenal segment spans residues 649–1105 (SETPLTPVWN…EWISGIFSGN (457 aa)). 8 disulfide bridges follow: Cys-735/Cys-770, Cys-739/Cys-777, Cys-751/Cys-885, Cys-765/Cys-896, Cys-780/Cys-904, Cys-806/Cys-815, Cys-823/Cys-832, and Cys-863/Cys-867. Residues 757 to 777 (YQYETSWGCNPSDCPGVGTGC) form a fusion loop region. Asn-928 carries N-linked (GlcNAc...) asparagine; by host glycosylation. Disulfide bonds link Cys-970–Cys-1000, Cys-993–Cys-1045, Cys-1010–Cys-1015, Cys-1046–Cys-1051, and Cys-1085–Cys-1089. Residues 1106-1126 (WIVLIVLCVFLLFSLVLLSIL) traverse the membrane as a helical segment. Residues 1122–1135 (LLSILCPVRKHKKS) are binding to the ribonucleoprotein. Over 1127-1135 (CPVRKHKKS) the chain is Cytoplasmic.

Belongs to the hantavirus envelope glycoprotein family. As to quaternary structure, homodimer. Homotetramer; forms heterotetrameric Gn-Gc spikes in the pre-fusion conformation. Interacts (via C-terminus) with the nucleoprotein. Interacts with host TUFM; this interaction contributes to the virus-induced degradation of mitochondria by autophagy, which leads to degradation of host MAVS and inhibition of type I interferon (IFN) responses. Interacts with host MAP1LC3B; this interaction contributes to the virus-induced degradation of mitochondria by autophagy, which leads to degradation of host MAVS and inhibition of type I interferon (IFN) responses. In terms of assembly, homotetramer; forms heterotetrameric Gn-Gc spikes in the pre-fusion conformation. Homotrimer; forms homotrimer in the post-fusion conformation at acidic pH. Interacts (via C-terminus) with the nucleoprotein. Specific enzymatic cleavage in vivo yield the mature proteins Glycoprotein N and Glycoprotein C.

Its subcellular location is the virion membrane. It localises to the host cell surface. The protein resides in the host Golgi apparatus membrane. The protein localises to the host endoplasmic reticulum membrane. It is found in the host mitochondrion. In terms of biological role, forms homotetramers with glycoprotein C at the surface of the virion. Attaches the virion to host cell receptors including integrin ITGAV/ITGB3. This attachment induces virion internalization predominantly through clathrin-dependent endocytosis. May also bind to host C1QBP for virus entry into the host cell. Mediates the assembly and budding of infectious virus particles through its interaction with the nucleocapsid protein and the viral genome. May dysregulate normal immune and endothelial cell responses through an ITAM motif. Translocates to mitochondria, binds to host TUFM and recruits MAP1LC3B. These interactions induce mitochondrial autophagy and therefore destruction of host MAVS leading to inhibition of type I interferon (IFN) responses. Concomitant breakdown of glycoprotein N is apparently prevented by the nucleoprotein that may inhibit Gn-stimulated autophagosome-lysosome fusion. Interacts with the viral genomic RNA. Functionally, homodimer. Homotetramer; forms heterotetrameric Gn-Gc spikes in the pre-fusion conformation. Attaches the virion to host cell receptors including integrin ITGAV/ITGB3. This attachment induces virion internalization predominantly through clathrin-dependent endocytosis. May also bind to host C1QBP for virus entry into the host cell. Class II fusion protein that promotes fusion of viral membrane with host endosomal membrane after endocytosis of the virion. This Apodemus agrarius (Eurasian field mouse) protein is Envelopment polyprotein (GP).